We begin with the raw amino-acid sequence, 324 residues long: Glucosyl-3-phosphoglycerate synthase (324 aa).

UDP-alpha-D-glucose-binding positions include 50–54 (PALNE), Ser81, Lys114, and 134–135 (DS). Asp136 contacts Mn(2+). Position 184–187 (184–187 (GRVT)) interacts with (2R)-3-phosphoglycerate. Residues 229–232 (YGVE) and 256–261 (RAHRNR) each bind UDP-alpha-D-glucose. Residue His258 participates in Mn(2+) binding. Residue Asn260 coordinates (2R)-3-phosphoglycerate.

Belongs to the glycosyltransferase 2 family. In terms of assembly, homotrimer. Mg(2+) is required as a cofactor. It depends on Mn(2+) as a cofactor.

The catalysed reaction is an NDP-alpha-D-glucose + (2R)-3-phosphoglycerate = (2R)-2-O-(alpha-D-glucopyranosyl)-3-phospho-glycerate + a ribonucleoside 5'-diphosphate + H(+). It catalyses the reaction (2R)-3-phosphoglycerate + UDP-alpha-D-glucose = (2R)-2-O-(alpha-D-glucopyranosyl)-3-phospho-glycerate + UDP + H(+). It carries out the reaction ADP-alpha-D-glucose + (2R)-3-phosphoglycerate = (2R)-2-O-(alpha-D-glucopyranosyl)-3-phospho-glycerate + ADP + H(+). The enzyme catalyses GDP-D-glucose + (2R)-3-phosphoglycerate = (2R)-2-O-(alpha-D-glucopyranosyl)-3-phospho-glycerate + GDP + H(+). Functionally, involved in the biosynthesis of 6-O-methylglucose lipopolysaccarides (MGLPs). Catalyzes the transfer of the glucose moiety from a nuleotide sugar such as UDP-alpha-D-glucose to the position 2 of 3-phospho-D-glycerate (3-PGA) to form glucosyl-3-phosphoglycerate (GPG). It can use UDP-glucose, ADP-glucose and GDP-glucose as sugar donor substrates with decreasing affinity and with 3-PGA as an acceptor. D-glycerate can only be an acceptor with ADP-glucose and at a very low rate. This Mycobacterium bovis (strain ATCC BAA-935 / AF2122/97) protein is Glucosyl-3-phosphoglycerate synthase (gpgS).